The following is a 410-amino-acid chain: Lissencephaly-1 homolog A (410 aa).

The LisH domain maps to 7–39; sequence QRDELNRAIADYLRSNGYEEAYSVFKKEAELDM. Positions 56–83 form a coiled coil; the sequence is TSVIRLQKKVMELESKLNEAKEEINIGG. 7 WD repeats span residues 106-145, 148-187, 190-229, 232-271, 274-333, 336-375, and 378-410; these read GHRS…FERT, GHTD…CIRT, GHDH…CVKT, GHRE…CKAE, EHEH…CLMT, GHDN…CTKT, and AHEH…WECR.

This sequence belongs to the WD repeat LIS1/nudF family. As to quaternary structure, can self-associate. Component of the cytosolic PAF-AH (I) heterotetrameric enzyme, which is composed of PAFAH1B1 (beta), PAFAH1B2 (alpha2) and PAFAH1B3 (alpha1) subunits. The catalytic activity of the enzyme resides in the alpha1 (PAFAH1B3) and alpha2 (PAFAH1B2) subunits, whereas the beta subunit (PAFAH1B1) has regulatory activity. Trimer formation is not essential for the catalytic activity. Interacts with dynein, dynactin, nde1 and ndel1.

Its subcellular location is the cytoplasm. It localises to the cytoskeleton. The protein localises to the microtubule organizing center. It is found in the centrosome. In terms of biological role, regulatory subunit (beta subunit) of the cytosolic type I platelet-activating factor (PAF) acetylhydrolase (PAF-AH (I)), an enzyme that catalyzes the hydrolyze of the acetyl group at the sn-2 position of PAF and its analogs and participates in PAF inactivation. Regulates the PAF-AH (I) activity in a catalytic dimer composition-dependent manner. Positively regulates the activity of the minus-end directed microtubule motor protein dynein. May enhance dynein-mediated microtubule sliding by targeting dynein to the microtubule plus end. Required for several dynein- and microtubule-dependent processes such as the maintenance of Golgi integrity, the peripheral transport of microtubule fragments and the coupling of the nucleus and centrosome. May be required for proliferation of neuronal precursors and neuronal migration. In Danio rerio (Zebrafish), this protein is Lissencephaly-1 homolog A (pafah1b1a).